The primary structure comprises 509 residues: Lanosterol 14-alpha demethylase (509 aa).

A helical transmembrane segment spans residues 30–50; sequence GNLLSMLLIACAFTLSLVYLF. Residue C455 participates in heme binding.

This sequence belongs to the cytochrome P450 family. Heme serves as cofactor. Post-translationally, ubiquitinated by MARCHF6, leading to proteasomal degradation.

The protein localises to the endoplasmic reticulum membrane. It localises to the microsome membrane. The catalysed reaction is a 14alpha-methyl steroid + 3 reduced [NADPH--hemoprotein reductase] + 3 O2 = a Delta(14) steroid + formate + 3 oxidized [NADPH--hemoprotein reductase] + 4 H2O + 4 H(+). It carries out the reaction lanosterol + 3 reduced [NADPH--hemoprotein reductase] + 3 O2 = 4,4-dimethyl-5alpha-cholesta-8,14,24-trien-3beta-ol + formate + 3 oxidized [NADPH--hemoprotein reductase] + 4 H2O + 4 H(+). The enzyme catalyses 24,25-dihydrolanosterol + 3 reduced [NADPH--hemoprotein reductase] + 3 O2 = 4,4-dimethyl-8,14-cholestadien-3beta-ol + formate + 3 oxidized [NADPH--hemoprotein reductase] + 4 H2O + 4 H(+). It catalyses the reaction a 14alpha-methyl steroid + reduced [NADPH--hemoprotein reductase] + O2 = a 14alpha-hydroxymethyl steroid + oxidized [NADPH--hemoprotein reductase] + H2O + H(+). The catalysed reaction is a 14alpha-hydroxymethyl steroid + reduced [NADPH--hemoprotein reductase] + O2 = a 14alpha-formyl steroid + oxidized [NADPH--hemoprotein reductase] + 2 H2O + H(+). It carries out the reaction a 14alpha-formyl steroid + reduced [NADPH--hemoprotein reductase] + O2 = a Delta(14) steroid + formate + oxidized [NADPH--hemoprotein reductase] + H2O + 2 H(+). The enzyme catalyses lanosterol + reduced [NADPH--hemoprotein reductase] + O2 = 32-hydroxylanosterol + oxidized [NADPH--hemoprotein reductase] + H2O + H(+). It catalyses the reaction 32-hydroxylanosterol + reduced [NADPH--hemoprotein reductase] + O2 = 32-oxolanosterol + oxidized [NADPH--hemoprotein reductase] + 2 H2O + H(+). The catalysed reaction is 32-oxolanosterol + reduced [NADPH--hemoprotein reductase] + O2 = 4,4-dimethyl-5alpha-cholesta-8,14,24-trien-3beta-ol + formate + oxidized [NADPH--hemoprotein reductase] + H2O + 2 H(+). It carries out the reaction 24,25-dihydrolanosterol + reduced [NADPH--hemoprotein reductase] + O2 = 32-hydroxy-24,25-dihydrolanosterol + oxidized [NADPH--hemoprotein reductase] + H2O + H(+). The enzyme catalyses 32-hydroxy-24,25-dihydrolanosterol + reduced [NADPH--hemoprotein reductase] + O2 = 32-oxo-24,25-dihydrolanosterol + oxidized [NADPH--hemoprotein reductase] + 2 H2O + H(+). It catalyses the reaction 32-oxo-24,25-dihydrolanosterol + reduced [NADPH--hemoprotein reductase] + O2 = 4,4-dimethyl-8,14-cholestadien-3beta-ol + formate + oxidized [NADPH--hemoprotein reductase] + H2O + 2 H(+). It functions in the pathway steroid biosynthesis; zymosterol biosynthesis; zymosterol from lanosterol: step 1/6. With respect to regulation, inhibited by azalanstat. Inhibited by azole antifungal agents ketoconazole, itraconazole and fluconazole. Its function is as follows. Sterol 14alpha-demethylase that plays a critical role in the cholesterol biosynthesis pathway, being cholesterol the major sterol component in mammalian membranes as well as a precursor for bile acid and steroid hormone synthesis. Cytochrome P450 monooxygenase that catalyzes the three-step oxidative removal of the 14alpha-methyl group (C-32) of sterols such as lanosterol (lanosta-8,24-dien-3beta-ol) and 24,25-dihydrolanosterol (DHL) in the form of formate, and converts the sterols to 4,4-dimethyl-5alpha-cholesta-8,14,24-trien-3beta-ol and 4,4-dimethyl-8,14-cholestadien-3beta-ol, respectively, which are intermediates of cholesterol biosynthesis. Can also demethylate substrates not intrinsic to mammals, such as eburicol (24-methylene-24,25-dihydrolanosterol), but at a lower rate than DHL. The polypeptide is Lanosterol 14-alpha demethylase (Pongo abelii (Sumatran orangutan)).